Reading from the N-terminus, the 524-residue chain is Serine/threonine-protein phosphatase 2A 56 kDa regulatory subunit gamma isoform (524 aa).

Position 1 is an N-acetylmethionine (Met1). The Nuclear localization signal motif lies at 472 to 489 (RKTVSDEARQAQKDPKKE). Residues 476 to 524 (SDEARQAQKDPKKERPLARRKSELPQDPHTKKALEAHCRADELVPQDGR) form a disordered region.

Belongs to the phosphatase 2A regulatory subunit B56 family. As to quaternary structure, PP2A consists of a common heterodimeric core enzyme, composed of PPP2CA a 36 kDa catalytic subunit (subunit C) and PPP2R1A a 65 kDa constant regulatory subunit (PR65 or subunit A), that associates with a variety of regulatory subunits. Proteins that associate with the core dimer include three families of regulatory subunits B (the R2/B/PR55/B55, R3/B''/PR72/PR130/PR59 and R5/B'/B56 families), the 48 kDa variable regulatory subunit, viral proteins, and cell signaling molecules. Interacts with SGO1. Interacts with SGO1; the interaction is direct. May interact with TP53. Interacts with IER3 and/or ERK kinases; regulates ERK dephosphorylation Interacts with CIP2A; this interaction stabilizes CIP2A. In terms of tissue distribution, highly expressed in testis, heart and spleen. Also found in brain and skeletal muscle.

It is found in the nucleus. It localises to the chromosome. The protein localises to the centromere. The B regulatory subunit might modulate substrate selectivity and catalytic activity, and might also direct the localization of the catalytic enzyme to a particular subcellular compartment. The PP2A-PPP2R5C holoenzyme may activate TP53 and play a role in DNA damage-induced inhibition of cell proliferation. PP2A-PPP2R5C may also regulate the ERK signaling pathway through ERK dephosphorylation. The protein is Serine/threonine-protein phosphatase 2A 56 kDa regulatory subunit gamma isoform (PPP2R5C) of Oryctolagus cuniculus (Rabbit).